Reading from the N-terminus, the 405-residue chain is Putative colanic acid polymerase (405 aa).

The next 11 membrane-spanning stretches (helical) occupy residues 5 to 25, 27 to 47, 55 to 75, 81 to 101, 117 to 137, 171 to 191, 204 to 224, 244 to 264, 282 to 302, 327 to 347, and 376 to 396; these read IRICSYLLLPLIYLLVNVKIA, LGESFPITIVTFLPVLLLLFL, LMIALGIGAGLTAFNYLFGQS, YVTSTMLFVYIVIIIGMVWSI, FFYLVVGLVVALAAVEMAQII, TALYFEPAFFALALISIWLSI, MILAGIILSGSFSGVMTFILF, PLALISLAVFLVGVVIAFPYI, IVGPLVMVGYSLTHIDGVVRF, GLYLLIIYFSWFAVFLSLWYM, and LFFTGSIFSPEYAFLIVCPFI.

The protein resides in the cell inner membrane. It participates in slime biogenesis; slime polysaccharide biosynthesis. The polypeptide is Putative colanic acid polymerase (wcaD) (Escherichia coli (strain K12)).